The following is a 116-amino-acid chain: Large ribosomal subunit protein eL22A (116 aa).

Belongs to the eukaryotic ribosomal protein eL22 family.

The chain is Large ribosomal subunit protein eL22A (rpl22) from Dictyostelium discoideum (Social amoeba).